Consider the following 447-residue polypeptide: Tubulin beta-1 chain (447 aa).

The GTP site is built by glutamine 11, glutamate 69, serine 138, glycine 142, threonine 143, glycine 144, asparagine 204, and asparagine 226. Residue glutamate 69 coordinates Mg(2+). The interval glutamate 427–asparagine 447 is disordered. Residues threonine 429–asparagine 447 show a composition bias toward acidic residues.

It belongs to the tubulin family. In terms of assembly, dimer of alpha and beta chains. A typical microtubule is a hollow water-filled tube with an outer diameter of 25 nm and an inner diameter of 15 nM. Alpha-beta heterodimers associate head-to-tail to form protofilaments running lengthwise along the microtubule wall with the beta-tubulin subunit facing the microtubule plus end conferring a structural polarity. Microtubules usually have 13 protofilaments but different protofilament numbers can be found in some organisms and specialized cells. It depends on Mg(2+) as a cofactor.

It is found in the cytoplasm. Its subcellular location is the cytoskeleton. Functionally, tubulin is the major constituent of microtubules, a cylinder consisting of laterally associated linear protofilaments composed of alpha- and beta-tubulin heterodimers. Microtubules grow by the addition of GTP-tubulin dimers to the microtubule end, where a stabilizing cap forms. Below the cap, tubulin dimers are in GDP-bound state, owing to GTPase activity of alpha-tubulin. The sequence is that of Tubulin beta-1 chain from Glossina morsitans morsitans (Savannah tsetse fly).